Consider the following 303-residue polypeptide: Tumor necrosis factor receptor type 1-associated DEATH domain protein (303 aa).

A Nuclear export signal motif is present at residues Q141–K157. A Death domain is found at T208–N298. Positions K224–L237 match the Nuclear localization signal motif.

Heterodimer with tnfrsf1a.

It localises to the nucleus. Its subcellular location is the cytoplasm. The protein localises to the cytoskeleton. In terms of biological role, adapter molecule for tnfrsf1a that specifically associates with the cytoplasmic domain of activated tnfrsf1a mediating its interaction with fadd. This is Tumor necrosis factor receptor type 1-associated DEATH domain protein from Xenopus laevis (African clawed frog).